Here is a 266-residue protein sequence, read N- to C-terminus: Zinc transport system ATP-binding protein TroB (266 aa).

Residues 11 to 243 (VQVDDLTLAY…YVQRAYGGRI (233 aa)) enclose the ABC transporter domain. 43-50 (GPNGAGKS) contributes to the ATP binding site.

The protein belongs to the ABC transporter superfamily.

In terms of biological role, part of an ATP-driven transport system TroABCD for zinc. The sequence is that of Zinc transport system ATP-binding protein TroB (troB) from Treponema pallidum (strain Nichols).